Consider the following 471-residue polypeptide: F-box only protein 3 (471 aa).

The region spanning 10–56 (PLTLESLPTDPLLLILSFLDYRDLINCCYVSRRLSQLSSHDPLWRRH) is the F-box domain. The ApaG domain maps to 278–408 (VATTGDITVS…FHMACPTFRV (131 aa)). Over residues 419–451 (EYEEMEEEEEEEEEEDEDDDSADMDESDEDDEE) the composition is skewed to acidic residues. Residues 419–455 (EYEEMEEEEEEEEEEDEDDDSADMDESDEDDEEERRR) form a disordered region.

In terms of assembly, part of a SCF (SKP1-cullin-F-box) protein ligase complex SCF(FBXO3) consisting of FBXO3, SKP1, CUL1 and RBX1. Interacts with PML, interaction is direct and takes place either alone or within the SCF complex. (Microbial infection) Interacts (via ApaG domain) with Rift valley fever virus NSs helical filament; this interaction forms a filamentous E3 which mediates degradation of TFIIH complex through interaction with GT2H1.

The protein localises to the nucleus. It functions in the pathway protein modification; protein ubiquitination. In terms of biological role, substrate recognition component of the SCF (SKP1-CUL1-F-box protein)-type E3 ubiquitin ligase complex, SCF(FBXO3), which mediates the ubiquitination and subsequent proteasomal degradation of target proteins. Mediates the ubiquitination of HIPK2 and probably that of EP300, leading to rapid degradation by the proteasome. In the presence of PML, HIPK2 ubiquitination still occurs, but degradation is prevented. PML, HIPK2 and FBXO3 may act synergically to activate p53/TP53-dependent transactivation. The SCF(FBXO3) also acts as a regulator of inflammation by mediating ubiquitination and degradation of FBXL2 in response to lipopolysaccharide (LPS). The SCF(FBXO3) complex specifically recognizes FBXL2 phosphorylated at 'Thr-404' and promotes its ubiquitination. Its function is as follows. (Microbial infection) Associates with the Rift valley fever virus NSs to form a remodeled E3 ligase that triggers efficient proteasomal degradation of targeted proteins. The filamentous E3 ligase targets the TFIIH complex leading to robust inhibition of antiviral immunity and enhances viral pathogenesis. The protein is F-box only protein 3 of Homo sapiens (Human).